Consider the following 291-residue polypeptide: GTPase Era (291 aa).

The region spanning 2 to 167 (KSGFVSIIGR…LDEIVKYLDE (166 aa)) is the Era-type G domain. Positions 10 to 17 (GRTNAGKS) are G1. 10–17 (GRTNAGKS) contacts GTP. The segment at 36–40 (NATRR) is G2. The G3 stretch occupies residues 57–60 (DTPG). GTP is bound by residues 57-61 (DTPGL) and 116-119 (NKVD). Residues 116–119 (NKVD) are G4. Positions 146 to 148 (YSS) are G5. In terms of domain architecture, KH type-2 spans 186–274 (YRDFILESIY…LLKLFVTVKK (89 aa)).

Belongs to the TRAFAC class TrmE-Era-EngA-EngB-Septin-like GTPase superfamily. Era GTPase family. Monomer.

It is found in the cytoplasm. Its subcellular location is the cell inner membrane. In terms of biological role, an essential GTPase that binds both GDP and GTP, with rapid nucleotide exchange. Plays a role in 16S rRNA processing and 30S ribosomal subunit biogenesis and possibly also in cell cycle regulation and energy metabolism. The polypeptide is GTPase Era (Campylobacter jejuni subsp. jejuni serotype O:23/36 (strain 81-176)).